Consider the following 469-residue polypeptide: 3-isopropylmalate dehydratase large subunit (469 aa).

Cysteine 350, cysteine 410, and cysteine 413 together coordinate [4Fe-4S] cluster.

Belongs to the aconitase/IPM isomerase family. LeuC type 1 subfamily. In terms of assembly, heterodimer of LeuC and LeuD. [4Fe-4S] cluster serves as cofactor.

The enzyme catalyses (2R,3S)-3-isopropylmalate = (2S)-2-isopropylmalate. It functions in the pathway amino-acid biosynthesis; L-leucine biosynthesis; L-leucine from 3-methyl-2-oxobutanoate: step 2/4. Catalyzes the isomerization between 2-isopropylmalate and 3-isopropylmalate, via the formation of 2-isopropylmaleate. This chain is 3-isopropylmalate dehydratase large subunit, found in Rhodopseudomonas palustris (strain TIE-1).